The following is a 144-amino-acid chain: SLTAKDKSVVKAFWGKISGKADVVGAEALGRDKMLTAYPQTKTYFSHWADLSPGSGPVKKHGGIIMGAIGKAVGLMDDLVGGMSALSDLHAFKLRVDPGNFKILSHNILVTLAIHFPSDFTPEVHIAVDKFLAAVSAALADKYR.

N-acetylserine is present on serine 1. One can recognise a Globin domain in the interval 1-144; the sequence is SLTAKDKSVV…VSAALADKYR (144 aa). Residue histidine 61 participates in O2 binding. Residue histidine 90 participates in heme b binding.

This sequence belongs to the globin family. As to quaternary structure, heterotetramer of two alpha chains and two beta chains. In terms of tissue distribution, red blood cells.

Its function is as follows. Involved in oxygen transport from gills to the various peripheral tissues. The protein is Hemoglobin subunit alpha-1 (hba1) of Oncorhynchus mykiss (Rainbow trout).